The sequence spans 81 residues: MKQGIHPDYHLVVFEDSATGYKFISGSTATSKETVEWEDGNEYPLVRVEVTSDSHPFYTGKQKFTQADGAVDKFNKKYGFK.

This sequence belongs to the bacterial ribosomal protein bL31 family. Type B subfamily. Part of the 50S ribosomal subunit.

This chain is Large ribosomal subunit protein bL31B, found in Limosilactobacillus fermentum (strain NBRC 3956 / LMG 18251) (Lactobacillus fermentum).